We begin with the raw amino-acid sequence, 89 residues long: UPF0223 protein BCG9842_B1176 (89 aa).

This sequence belongs to the UPF0223 family.

The sequence is that of UPF0223 protein BCG9842_B1176 from Bacillus cereus (strain G9842).